The sequence spans 333 residues: T-cell surface glycoprotein CD1b1 (333 aa).

Positions 1-17 are cleaved as a signal peptide; that stretch reads MLLVALALLAFLFPAGD. Residues 18 to 302 are Extracellular-facing; it reads TQNALQWPTS…LYWGHSISIG (285 aa). N-linked (GlcNAc...) asparagine glycans are attached at residues asparagine 38, asparagine 75, and asparagine 146. 3 disulfides stabilise this stretch: cysteine 120–cysteine 184, cysteine 149–cysteine 163, and cysteine 224–cysteine 279. Residues 197-295 form the Ig-like domain; sequence PDIQKQVKPD…LEGQDIILYW (99 aa). A helical membrane pass occupies residues 303 to 323; it reads WIILAVLVPCLIVLVLFVLWF. Topologically, residues 324 to 333 are cytoplasmic; it reads YRRWSYEDIL. Positions 329–332 match the Internalization signal motif; it reads YEDI.

Heterodimer with B2M (beta-2-microglobulin). Interacts with saposin C.

Its subcellular location is the cell membrane. The protein resides in the endosome membrane. It localises to the lysosome membrane. Functionally, antigen-presenting protein that binds self and non-self lipid and glycolipid antigens and presents them to T-cell receptors on natural killer T-cells. The protein is T-cell surface glycoprotein CD1b1 (CD1B1) of Cavia porcellus (Guinea pig).